Consider the following 131-residue polypeptide: Sec-independent protein translocase protein TatB (131 aa).

The chain crosses the membrane as a helical span at residues 1–21 (MFDISFAELVVVGIVALIVIG). Composition is skewed to polar residues over residues 71 to 93 (NSFE…TQSA) and 111 to 131 (PVNT…QPNS). Positions 71-131 (NSFENSVRSE…APAEPRQPNS (61 aa)) are disordered.

It belongs to the TatB family. The Tat system comprises two distinct complexes: a TatABC complex, containing multiple copies of TatA, TatB and TatC subunits, and a separate TatA complex, containing only TatA subunits. Substrates initially bind to the TatABC complex, which probably triggers association of the separate TatA complex to form the active translocon.

The protein localises to the cell inner membrane. Functionally, part of the twin-arginine translocation (Tat) system that transports large folded proteins containing a characteristic twin-arginine motif in their signal peptide across membranes. Together with TatC, TatB is part of a receptor directly interacting with Tat signal peptides. TatB may form an oligomeric binding site that transiently accommodates folded Tat precursor proteins before their translocation. The chain is Sec-independent protein translocase protein TatB from Nitrosomonas europaea (strain ATCC 19718 / CIP 103999 / KCTC 2705 / NBRC 14298).